The primary structure comprises 157 residues: Small ribosomal subunit protein uS7 (157 aa).

It belongs to the universal ribosomal protein uS7 family. In terms of assembly, part of the 30S ribosomal subunit. Contacts proteins S9 and S11.

Its function is as follows. One of the primary rRNA binding proteins, it binds directly to 16S rRNA where it nucleates assembly of the head domain of the 30S subunit. Is located at the subunit interface close to the decoding center, probably blocks exit of the E-site tRNA. In Psychrobacter cryohalolentis (strain ATCC BAA-1226 / DSM 17306 / VKM B-2378 / K5), this protein is Small ribosomal subunit protein uS7.